A 402-amino-acid polypeptide reads, in one-letter code: MVDAAIRGTLPAGTGTNASQRGTIAMVAGEASGDLLASLMLGGLKARLGDTVSYAGIGGKRMMTEGFVSQWPMETLSVNGYVEVLGSLREILATRRAIRDSLLANPPLCFIGVDAPDFNFGLEVPLRRAGIPVVHFVSPSIWAWRGGRIRTIARAVDHILCLFPFEPEIYAKAGIPATYVGHPLADVIPMVPDVAGARAALDLPAGCRVVAVLPGSRQSEVRNLGATFFAAMARMHRMDPNLAFVLPAASAPLRAIVEELHQQYPELRLTIVDGNSHQAMEAADVVLLASGTATLEAALYKKPMVISYKVPWLTAQIMKRQGYLPYVGLPNILSGRFVVPELLQDDATPEALARETLLQLNDQGNIAFLYEHFTRMHETLKCNTAQLAADVVVDLMRSRGLV.

Belongs to the LpxB family.

It carries out the reaction a lipid X + a UDP-2-N,3-O-bis[(3R)-3-hydroxyacyl]-alpha-D-glucosamine = a lipid A disaccharide + UDP + H(+). It participates in bacterial outer membrane biogenesis; LPS lipid A biosynthesis. Its function is as follows. Condensation of UDP-2,3-diacylglucosamine and 2,3-diacylglucosamine-1-phosphate to form lipid A disaccharide, a precursor of lipid A, a phosphorylated glycolipid that anchors the lipopolysaccharide to the outer membrane of the cell. This is Lipid-A-disaccharide synthase from Cupriavidus pinatubonensis (strain JMP 134 / LMG 1197) (Cupriavidus necator (strain JMP 134)).